A 231-amino-acid polypeptide reads, in one-letter code: Demethylmenaquinone methyltransferase (231 aa).

S-adenosyl-L-methionine is bound by residues Thr62, Asp80, Asp100–Ala101, and Ser117.

The protein belongs to the class I-like SAM-binding methyltransferase superfamily. MenG/UbiE family.

It carries out the reaction a 2-demethylmenaquinol + S-adenosyl-L-methionine = a menaquinol + S-adenosyl-L-homocysteine + H(+). It participates in quinol/quinone metabolism; menaquinone biosynthesis; menaquinol from 1,4-dihydroxy-2-naphthoate: step 2/2. In terms of biological role, methyltransferase required for the conversion of demethylmenaquinol (DMKH2) to menaquinol (MKH2). The polypeptide is Demethylmenaquinone methyltransferase (Mycobacterium marinum (strain ATCC BAA-535 / M)).